A 246-amino-acid polypeptide reads, in one-letter code: tRNA (guanine-N(1)-)-methyltransferase (246 aa).

Residues Gly-113 and 133 to 138 contribute to the S-adenosyl-L-methionine site; that span reads IGDFVM.

Belongs to the RNA methyltransferase TrmD family. Homodimer.

It localises to the cytoplasm. It catalyses the reaction guanosine(37) in tRNA + S-adenosyl-L-methionine = N(1)-methylguanosine(37) in tRNA + S-adenosyl-L-homocysteine + H(+). Its function is as follows. Specifically methylates guanosine-37 in various tRNAs. The polypeptide is tRNA (guanine-N(1)-)-methyltransferase (Vibrio atlanticus (strain LGP32) (Vibrio splendidus (strain Mel32))).